A 635-amino-acid chain; its full sequence is Chaperone protein HtpG (635 aa).

The tract at residues Met-1–Arg-346 is a; substrate-binding. The interval Glu-347–Arg-563 is b. A c region spans residues Met-564–Ala-635.

It belongs to the heat shock protein 90 family. Homodimer.

The protein resides in the cytoplasm. In terms of biological role, molecular chaperone. Has ATPase activity. This chain is Chaperone protein HtpG, found in Bordetella parapertussis (strain 12822 / ATCC BAA-587 / NCTC 13253).